Reading from the N-terminus, the 132-residue chain is Nuclear transition protein 2 (132 aa).

Positions 1-20 (MDTKTQSLPNTHAQPHSNSR) are enriched in polar residues. The interval 1–132 (MDTKTQSLPN…KRQSSGRKYN (132 aa)) is disordered. Zn(2+)-binding residues include His-12, His-16, His-24, Cys-29, Cys-31, and Cys-35. Basic residues predominate over residues 37 to 59 (SRSRSRSCRSRSSSRRPRSHRSP). Residues 82–94 (SHQCPSRPVTHSC) show a composition bias toward polar residues. A Nuclear localization signal motif is present at residues 105–113 (GKVIKRKQV). The span at 108–132 (IKRKQVKRSKQVYKRKRQSSGRKYN) shows a compositional bias: basic residues. Phosphoserine is present on Ser-127.

This sequence belongs to the nuclear transition protein 2 family. As to expression, testis.

It localises to the nucleus. The protein localises to the nucleolus. Its subcellular location is the chromosome. Its function is as follows. Plays a key role in the replacement of histones to protamine in the elongating spermatids of mammals. In condensing spermatids, loaded onto the nucleosomes, where it promotes the recruitment and processing of protamines, which are responsible for histone eviction. This Bos taurus (Bovine) protein is Nuclear transition protein 2 (TNP2).